The primary structure comprises 678 residues: uncharacterized protein (678 aa).

Helical transmembrane passes span 14–34 (LMFA…WTGL) and 180–200 (GAVI…IGGF).

This sequence belongs to the mycobacterial PPE family.

It localises to the cell membrane. This is an uncharacterized protein from Mycobacterium tuberculosis (strain ATCC 25618 / H37Rv).